Here is a 225-residue protein sequence, read N- to C-terminus: Probable GTP-binding protein EngB (225 aa).

In terms of domain architecture, EngB-type G spans 40–224 (GPPEVAFAGR…RAAIVHAVTA (185 aa)). GTP-binding positions include 48–55 (GRSNVGKS), 75–79 (GRTQE), 102–105 (DMPG), 169–172 (TKAD), and 203–205 (TSS). 2 residues coordinate Mg(2+): Ser55 and Thr77.

This sequence belongs to the TRAFAC class TrmE-Era-EngA-EngB-Septin-like GTPase superfamily. EngB GTPase family. The cofactor is Mg(2+).

Its function is as follows. Necessary for normal cell division and for the maintenance of normal septation. In Chelativorans sp. (strain BNC1), this protein is Probable GTP-binding protein EngB.